The following is a 69-amino-acid chain: Large ribosomal subunit protein uL30 (69 aa).

Belongs to the universal ribosomal protein uL30 family. Part of the 50S ribosomal subunit.

This Rhizobium etli (strain CIAT 652) protein is Large ribosomal subunit protein uL30.